The following is a 311-amino-acid chain: Probable lipid kinase YegS-like (311 aa).

The region spanning 9–140 (EHDGDTWLIL…VDVGTLGDDY (132 aa)) is the DAGKc domain. ATP contacts are provided by residues Thr47, 73-79 (GDGTVNE), and Ser102. Mg(2+) contacts are provided by Lys221, Asp224, and Leu226. The Proton acceptor role is filled by Glu281.

Belongs to the diacylglycerol/lipid kinase family. YegS lipid kinase subfamily. Mg(2+) serves as cofactor. It depends on Ca(2+) as a cofactor.

The protein localises to the cytoplasm. Functionally, probably phosphorylates lipids; the in vivo substrate is unknown. The sequence is that of Probable lipid kinase YegS-like from Chromohalobacter salexigens (strain ATCC BAA-138 / DSM 3043 / CIP 106854 / NCIMB 13768 / 1H11).